Consider the following 252-residue polypeptide: Small ribosomal subunit protein uS2 (252 aa).

This sequence belongs to the universal ribosomal protein uS2 family.

The protein is Small ribosomal subunit protein uS2 of Alcanivorax borkumensis (strain ATCC 700651 / DSM 11573 / NCIMB 13689 / SK2).